A 243-amino-acid polypeptide reads, in one-letter code: 1-(5-phosphoribosyl)-5-[(5-phosphoribosylamino)methylideneamino] imidazole-4-carboxamide isomerase (243 aa).

D8 (proton acceptor) is an active-site residue. D129 functions as the Proton donor in the catalytic mechanism.

This sequence belongs to the HisA/HisF family.

The protein localises to the cytoplasm. It catalyses the reaction 1-(5-phospho-beta-D-ribosyl)-5-[(5-phospho-beta-D-ribosylamino)methylideneamino]imidazole-4-carboxamide = 5-[(5-phospho-1-deoxy-D-ribulos-1-ylimino)methylamino]-1-(5-phospho-beta-D-ribosyl)imidazole-4-carboxamide. It participates in amino-acid biosynthesis; L-histidine biosynthesis; L-histidine from 5-phospho-alpha-D-ribose 1-diphosphate: step 4/9. The chain is 1-(5-phosphoribosyl)-5-[(5-phosphoribosylamino)methylideneamino] imidazole-4-carboxamide isomerase from Brucella suis biovar 1 (strain 1330).